We begin with the raw amino-acid sequence, 644 residues long: Exoribonuclease 2 (644 aa).

Positions 189–516 constitute an RNB domain; it reads REDLTALDFV…NHRLLKAIIK (328 aa). The 83-residue stretch at 561-643 folds into the S1 motif domain; it reads DSRFAAEIID…ETRSVIARPV (83 aa).

Belongs to the RNR ribonuclease family. RNase II subfamily.

The protein resides in the cytoplasm. The enzyme catalyses Exonucleolytic cleavage in the 3'- to 5'-direction to yield nucleoside 5'-phosphates.. Functionally, involved in mRNA degradation. Hydrolyzes single-stranded polyribonucleotides processively in the 3' to 5' direction. In Cronobacter sakazakii (strain ATCC BAA-894) (Enterobacter sakazakii), this protein is Exoribonuclease 2.